We begin with the raw amino-acid sequence, 304 residues long: Homoserine kinase (304 aa).

90-100 (PLARGLGSSAS) contacts ATP.

This sequence belongs to the GHMP kinase family. Homoserine kinase subfamily.

Its subcellular location is the cytoplasm. It catalyses the reaction L-homoserine + ATP = O-phospho-L-homoserine + ADP + H(+). The protein operates within amino-acid biosynthesis; L-threonine biosynthesis; L-threonine from L-aspartate: step 4/5. In terms of biological role, catalyzes the ATP-dependent phosphorylation of L-homoserine to L-homoserine phosphate. The sequence is that of Homoserine kinase from Staphylococcus aureus (strain bovine RF122 / ET3-1).